A 448-amino-acid polypeptide reads, in one-letter code: Exodeoxyribonuclease 7 large subunit (448 aa).

Belongs to the XseA family. As to quaternary structure, heterooligomer composed of large and small subunits.

It is found in the cytoplasm. It catalyses the reaction Exonucleolytic cleavage in either 5'- to 3'- or 3'- to 5'-direction to yield nucleoside 5'-phosphates.. Functionally, bidirectionally degrades single-stranded DNA into large acid-insoluble oligonucleotides, which are then degraded further into small acid-soluble oligonucleotides. The chain is Exodeoxyribonuclease 7 large subunit from Enterococcus faecalis (strain ATCC 700802 / V583).